Reading from the N-terminus, the 519-residue chain is Amphoterin-induced protein 2 (519 aa).

Residues 1 to 38 (MSLRFHTLPTLPRAVKPGCRELLCLLVIAVMVSPSASG) form the signal peptide. In terms of domain architecture, LRRNT spans 39 to 67 (MCPTACICATDIVSCTNKNLSKVPGNLFR). The Extracellular portion of the chain corresponds to 39–397 (MCPTACICAT…RSHAHEAFNT (359 aa)). 2 cysteine pairs are disulfide-bonded: Cys40–Cys46 and Cys44–Cys53. N-linked (GlcNAc...) asparagine glycosylation occurs at Asn57. LRR repeat units follow at residues 68–89 (LIKR…WIPV), 93–114 (KLST…SFST), 117–138 (NLKC…TFQE), 141–162 (ALEV…AFGG), 165–186 (HLQK…LYTG), and 192–213 (DLTF…HINL). The N-linked (GlcNAc...) asparagine glycan is linked to Asn103. Residues 227–283 (NPFVCDCSLYSLLIFWYRRHFSSVMDFKNDYTCRLWSDSRHSHQLQLLQESFLNCSY) enclose the LRRCT domain. Intrachain disulfides connect Cys231–Cys259 and Cys233–Cys281. N-linked (GlcNAc...) asparagine glycosylation is found at Asn280, Asn287, Asn344, Asn372, Asn380, Asn383, and Asn387. One can recognise an Ig-like C2-type domain in the interval 288–378 (GSFHALGFIH…RLLNETVDIM (91 aa)). Residues Cys309 and Cys362 are joined by a disulfide bond. The helical transmembrane segment at 398–418 (AFTTLAACVASIVLVLLYLYL) threads the bilayer. Topologically, residues 419-519 (TPCPCKCKAK…FSDTPFVAST (101 aa)) are cytoplasmic. The segment at 498-519 (RAKSDSDSVNSVFSDTPFVAST) is disordered.

This sequence belongs to the immunoglobulin superfamily. AMIGO family. In terms of assembly, binds itself as well as AMIGO1 and AMIGO3. In terms of tissue distribution, highest level in cerebellum, retina, liver, and lung. Lower levels in cerebrum, kidney, small intestine, spleen and testis.

The protein localises to the cell membrane. It is found in the nucleus. Required for depolarization-dependent survival of cultured cerebellar granule neurons. May mediate homophilic as well as heterophilic cell-cell interaction with AMIGO1 or AMIGO3. May contribute to signal transduction through its intracellular domain. The polypeptide is Amphoterin-induced protein 2 (Mus musculus (Mouse)).